The sequence spans 275 residues: Exosome complex component Rrp42 (275 aa).

This sequence belongs to the RNase PH family. Rrp42 subfamily. In terms of assembly, component of the archaeal exosome complex. Forms a hexameric ring-like arrangement composed of 3 Rrp41-Rrp42 heterodimers. The hexameric ring associates with a trimer of Rrp4 and/or Csl4 subunits.

The protein resides in the cytoplasm. Its function is as follows. Non-catalytic component of the exosome, which is a complex involved in RNA degradation. Contributes to the structuring of the Rrp41 active site. The chain is Exosome complex component Rrp42 from Saccharolobus solfataricus (strain ATCC 35092 / DSM 1617 / JCM 11322 / P2) (Sulfolobus solfataricus).